The following is a 301-amino-acid chain: Formylmethanofuran--tetrahydromethanopterin formyltransferase-like protein (301 aa).

This sequence belongs to the FTR family.

The protein is Formylmethanofuran--tetrahydromethanopterin formyltransferase-like protein of Archaeoglobus fulgidus (strain ATCC 49558 / DSM 4304 / JCM 9628 / NBRC 100126 / VC-16).